The sequence spans 122 residues: NADH-quinone oxidoreductase subunit A (122 aa).

Helical transmembrane passes span 10-30 (MIVL…LTLG), 66-86 (IFAL…PWAV), and 91-111 (LGLF…VGLA).

Belongs to the complex I subunit 3 family. As to quaternary structure, NDH-1 is composed of 14 different subunits. Subunits NuoA, H, J, K, L, M, N constitute the membrane sector of the complex.

The protein resides in the cell membrane. It carries out the reaction a quinone + NADH + 5 H(+)(in) = a quinol + NAD(+) + 4 H(+)(out). NDH-1 shuttles electrons from NADH, via FMN and iron-sulfur (Fe-S) centers, to quinones in the respiratory chain. The immediate electron acceptor for the enzyme in this species is believed to be a menaquinone. Couples the redox reaction to proton translocation (for every two electrons transferred, four hydrogen ions are translocated across the cytoplasmic membrane), and thus conserves the redox energy in a proton gradient. This is NADH-quinone oxidoreductase subunit A from Bacillus mycoides (strain KBAB4) (Bacillus weihenstephanensis).